Reading from the N-terminus, the 259-residue chain is Dihydroorotate dehydrogenase B (NAD(+)), electron transfer subunit (259 aa).

In terms of domain architecture, FAD-binding FR-type spans 2–102; sequence MQKQNMIVVN…LGPLGHGFPV (101 aa). FAD is bound by residues 53–56, 70–72, and 77–78; these read RPIS, LYR, and GT. [2Fe-2S] cluster contacts are provided by Cys-221, Cys-226, Cys-229, and Cys-246.

It belongs to the PyrK family. In terms of assembly, heterotetramer of 2 PyrK and 2 PyrD type B subunits. The cofactor is [2Fe-2S] cluster. FAD is required as a cofactor.

Its pathway is pyrimidine metabolism; UMP biosynthesis via de novo pathway; orotate from (S)-dihydroorotate (NAD(+) route): step 1/1. In terms of biological role, responsible for channeling the electrons from the oxidation of dihydroorotate from the FMN redox center in the PyrD type B subunit to the ultimate electron acceptor NAD(+). The chain is Dihydroorotate dehydrogenase B (NAD(+)), electron transfer subunit from Bacillus cereus (strain G9842).